Consider the following 479-residue polypeptide: M-phase inducer phosphatase (479 aa).

The tract at residues 182–218 is disordered; that stretch reads MTESNTNSTTTPPPKTPETARDCFKRPEPPASANCSP. A compositionally biased stretch (basic and acidic residues) spans 199 to 209; sequence ETARDCFKRPE. Residues 316–432 enclose the Rhodanese domain; sequence KVASYRIIDC…FFESHVELCE (117 aa). Residue C379 is part of the active site. S455 is subject to Phosphoserine.

It belongs to the MPI phosphatase family.

The catalysed reaction is O-phospho-L-tyrosyl-[protein] + H2O = L-tyrosyl-[protein] + phosphate. Functionally, this protein functions as a dosage-dependent inducer in mitotic control. It is a tyrosine protein phosphatase required for progression of the cell cycle. It may directly dephosphorylate Cdk1 and activate the Cdk1 activity. This is M-phase inducer phosphatase (stg) from Drosophila melanogaster (Fruit fly).